The primary structure comprises 243 residues: uncharacterized protein (243 aa).

A signal peptide spans 1-19 (MDELALSFSLTCLLPENRA). Asn-136 is a glycosylation site (N-linked (GlcNAc...) asparagine).

It is found in the secreted. This is an uncharacterized protein from Homo sapiens (Human).